Here is a 550-residue protein sequence, read N- to C-terminus: Membrane protein insertase YidC (550 aa).

Residues 6-26 (LIVFIVLSFGLLFVWQEYFAP) form a helical membrane-spanning segment. The disordered stretch occupies residues 30–59 (PKPVAAAVQPDGTPAPATARPADSPATGKL). The next 4 membrane-spanning stretches (helical) occupy residues 360–380 (WGWAIVLLTVLVKAAFYPLSA), 430–450 (LPIVVQIPVFIGLYWALLASV), 472–492 (ILPALMAATMYLQTFLNPPPA), and 504–524 (PLAFSVMFFFFPAGLVLYWLV).

The protein belongs to the OXA1/ALB3/YidC family. Type 1 subfamily. Interacts with the Sec translocase complex via SecD. Specifically interacts with transmembrane segments of nascent integral membrane proteins during membrane integration.

It localises to the cell inner membrane. In terms of biological role, required for the insertion and/or proper folding and/or complex formation of integral membrane proteins into the membrane. Involved in integration of membrane proteins that insert both dependently and independently of the Sec translocase complex, as well as at least some lipoproteins. Aids folding of multispanning membrane proteins. In Laribacter hongkongensis (strain HLHK9), this protein is Membrane protein insertase YidC.